A 526-amino-acid chain; its full sequence is Chaperonin GroEL 2 (526 aa).

Positions 50, 413, and 494 each coordinate ATP.

This sequence belongs to the chaperonin (HSP60) family. Forms a cylinder of 14 subunits composed of two heptameric rings stacked back-to-back. Interacts with the co-chaperonin GroES.

Its subcellular location is the cytoplasm. It catalyses the reaction ATP + H2O + a folded polypeptide = ADP + phosphate + an unfolded polypeptide.. Its function is as follows. Together with its co-chaperonin GroES, plays an essential role in assisting protein folding. The GroEL-GroES system forms a nano-cage that allows encapsulation of the non-native substrate proteins and provides a physical environment optimized to promote and accelerate protein folding. The chain is Chaperonin GroEL 2 from Chlamydia pneumoniae (Chlamydophila pneumoniae).